An 85-amino-acid chain; its full sequence is UPF0512 protein R (85 aa).

This sequence belongs to the UPF0512 family.

This is UPF0512 protein R from Dictyostelium discoideum (Social amoeba).